Reading from the N-terminus, the 103-residue chain is ATP synthase subunit c (103 aa).

3 helical membrane-spanning segments follow: residues 3–23 (FLALLCLGMVGFAFGAEVSGL), 30–50 (SIAGAVIGLGIAALGGAIGMG), and 74–94 (MFIALALIEAQVIYTLVLALI).

It belongs to the ATPase C chain family. F-type ATPases have 2 components, F(1) - the catalytic core - and F(0) - the membrane proton channel. F(1) has five subunits: alpha(3), beta(3), gamma(1), delta(1), epsilon(1). F(0) has three main subunits: a(1), b(2) and c(10-14). The alpha and beta chains form an alternating ring which encloses part of the gamma chain. F(1) is attached to F(0) by a central stalk formed by the gamma and epsilon chains, while a peripheral stalk is formed by the delta and b chains.

Its subcellular location is the cell inner membrane. Functionally, f(1)F(0) ATP synthase produces ATP from ADP in the presence of a proton or sodium gradient. F-type ATPases consist of two structural domains, F(1) containing the extramembraneous catalytic core and F(0) containing the membrane proton channel, linked together by a central stalk and a peripheral stalk. During catalysis, ATP synthesis in the catalytic domain of F(1) is coupled via a rotary mechanism of the central stalk subunits to proton translocation. In terms of biological role, key component of the F(0) channel; it plays a direct role in translocation across the membrane. A homomeric c-ring of between 10-14 subunits forms the central stalk rotor element with the F(1) delta and epsilon subunits. This is ATP synthase subunit c from Helicobacter hepaticus (strain ATCC 51449 / 3B1).